The chain runs to 131 residues: Profilin-A (131 aa).

Belongs to the profilin family. As to quaternary structure, occurs in many kinds of cells as a complex with monomeric actin in a 1:1 ratio.

The protein resides in the cytoplasm. The protein localises to the cytoskeleton. Binds to actin and affects the structure of the cytoskeleton. At high concentrations, profilin prevents the polymerization of actin, whereas it enhances it at low concentrations. By binding to PIP2, it inhibits the formation of IP3 and DG. May serve as a modulator in pollen germination and pollen tube growth. This is Profilin-A from Oryza sativa subsp. japonica (Rice).